The sequence spans 426 residues: Histidinol dehydrogenase (426 aa).

NAD(+) contacts are provided by Tyr125, Gln187, and Asn210. Substrate-binding residues include Ser233, Gln255, and His258. The Zn(2+) site is built by Gln255 and His258. Catalysis depends on proton acceptor residues Glu323 and His324. Substrate-binding residues include His324, Asp357, Glu411, and His416. Position 357 (Asp357) interacts with Zn(2+). Zn(2+) is bound at residue His416.

This sequence belongs to the histidinol dehydrogenase family. It depends on Zn(2+) as a cofactor.

It catalyses the reaction L-histidinol + 2 NAD(+) + H2O = L-histidine + 2 NADH + 3 H(+). It functions in the pathway amino-acid biosynthesis; L-histidine biosynthesis; L-histidine from 5-phospho-alpha-D-ribose 1-diphosphate: step 9/9. Catalyzes the sequential NAD-dependent oxidations of L-histidinol to L-histidinaldehyde and then to L-histidine. This is Histidinol dehydrogenase (hisD) from Methanothermobacter thermautotrophicus (strain ATCC 29096 / DSM 1053 / JCM 10044 / NBRC 100330 / Delta H) (Methanobacterium thermoautotrophicum).